The following is a 316-amino-acid chain: Aspartate carbamoyltransferase catalytic subunit (316 aa).

The carbamoyl phosphate site is built by R56 and T57. K84 is an L-aspartate binding site. Carbamoyl phosphate-binding residues include R106, H139, and Q142. R172 and R224 together coordinate L-aspartate. Positions 268 and 269 each coordinate carbamoyl phosphate.

It belongs to the aspartate/ornithine carbamoyltransferase superfamily. ATCase family. In terms of assembly, heterododecamer (2C3:3R2) of six catalytic PyrB chains organized as two trimers (C3), and six regulatory PyrI chains organized as three dimers (R2).

The catalysed reaction is carbamoyl phosphate + L-aspartate = N-carbamoyl-L-aspartate + phosphate + H(+). It participates in pyrimidine metabolism; UMP biosynthesis via de novo pathway; (S)-dihydroorotate from bicarbonate: step 2/3. Its function is as follows. Catalyzes the condensation of carbamoyl phosphate and aspartate to form carbamoyl aspartate and inorganic phosphate, the committed step in the de novo pyrimidine nucleotide biosynthesis pathway. The protein is Aspartate carbamoyltransferase catalytic subunit of Ligilactobacillus salivarius (strain UCC118) (Lactobacillus salivarius).